The primary structure comprises 290 residues: Elongation factor Ts (290 aa).

An involved in Mg(2+) ion dislocation from EF-Tu region spans residues 87–90; it reads TDFV.

This sequence belongs to the EF-Ts family.

It is found in the cytoplasm. Functionally, associates with the EF-Tu.GDP complex and induces the exchange of GDP to GTP. It remains bound to the aminoacyl-tRNA.EF-Tu.GTP complex up to the GTP hydrolysis stage on the ribosome. This Treponema pallidum (strain Nichols) protein is Elongation factor Ts (tsf).